Consider the following 133-residue polypeptide: Large ribosomal subunit protein eL19 (133 aa).

Positions 55-83 are disordered; the sequence is RGISGARKKPRRKGPGSRKGGKYSKLPRK. Positions 60–83 are enriched in basic residues; the sequence is ARKKPRRKGPGSRKGGKYSKLPRK.

The protein belongs to the eukaryotic ribosomal protein eL19 family. In terms of assembly, part of the 50S ribosomal subunit.

Its function is as follows. Binds to the 23S rRNA. This Korarchaeum cryptofilum (strain OPF8) protein is Large ribosomal subunit protein eL19.